Reading from the N-terminus, the 371-residue chain is Neuropeptide S receptor (371 aa).

At Met-1 to Gln-52 the chain is on the extracellular side. N-linked (GlcNAc...) asparagine glycans are attached at residues Asn-4 and Asn-13. Residues Leu-53–Ser-73 traverse the membrane as a helical segment. At Thr-74–Arg-82 the chain is on the cytoplasmic side. Residues Met-83 to Leu-103 form a helical membrane-spanning segment. The Extracellular portion of the chain corresponds to Thr-104–Val-123. Residues Cys-121 and Cys-197 are joined by a disulfide bond. A helical transmembrane segment spans residues Val-124–Ile-144. Residues Asp-145–Lys-164 are Cytoplasmic-facing. A helical transmembrane segment spans residues Val-165–Phe-185. Topologically, residues Gly-186–Thr-212 are extracellular. Residues Ile-213–Val-233 traverse the membrane as a helical segment. At Ile-234 to Tyr-275 the chain is on the cytoplasmic side. Residues Ser-276–Leu-296 form a helical membrane-spanning segment. Over Asp-297–Ser-312 the chain is Extracellular. The helical transmembrane segment at Val-313–Phe-333 threads the bilayer. At Ser-334 to Ile-371 the chain is on the cytoplasmic side.

The protein belongs to the G-protein coupled receptor 1 family. Vasopressin/oxytocin receptor subfamily.

The protein localises to the cell membrane. Functionally, G-protein coupled receptor for neuropeptide S (NPS). Promotes mobilization of intracellular Ca(2+) stores. Inhibits cell growth in response to NPS binding. Involved in pathogenesis of asthma and other IgE-mediated diseases. This Macaca mulatta (Rhesus macaque) protein is Neuropeptide S receptor (NPSR1).